Here is a 338-residue protein sequence, read N- to C-terminus: Phosphatidate cytidylyltransferase, mitochondrial (338 aa).

The protein belongs to the TAM41 family. Requires Mg(2+) as cofactor.

It is found in the mitochondrion inner membrane. It catalyses the reaction a 1,2-diacyl-sn-glycero-3-phosphate + CTP + H(+) = a CDP-1,2-diacyl-sn-glycerol + diphosphate. Its pathway is phospholipid metabolism; CDP-diacylglycerol biosynthesis; CDP-diacylglycerol from sn-glycerol 3-phosphate: step 3/3. Its function is as follows. Catalyzes the conversion of phosphatidic acid (PA) to CDP-diacylglycerol (CDP-DAG), an essential intermediate in the synthesis of phosphatidylglycerol, cardiolipin and phosphatidylinositol. This is Phosphatidate cytidylyltransferase, mitochondrial (tamm41) from Xenopus laevis (African clawed frog).